The following is a 326-amino-acid chain: tRNA(Ile)-lysidine synthase (326 aa).

23-28 (SGGVDS) lines the ATP pocket.

Belongs to the tRNA(Ile)-lysidine synthase family.

The protein resides in the cytoplasm. The catalysed reaction is cytidine(34) in tRNA(Ile2) + L-lysine + ATP = lysidine(34) in tRNA(Ile2) + AMP + diphosphate + H(+). Functionally, ligates lysine onto the cytidine present at position 34 of the AUA codon-specific tRNA(Ile) that contains the anticodon CAU, in an ATP-dependent manner. Cytidine is converted to lysidine, thus changing the amino acid specificity of the tRNA from methionine to isoleucine. The sequence is that of tRNA(Ile)-lysidine synthase from Wolinella succinogenes (strain ATCC 29543 / DSM 1740 / CCUG 13145 / JCM 31913 / LMG 7466 / NCTC 11488 / FDC 602W) (Vibrio succinogenes).